The following is a 529-amino-acid chain: Type I restriction enzyme EcoKI methylase subunit (529 aa).

S-adenosyl-L-methionine contacts are provided by residues 148 to 153, 178 to 180, and Glu-216; these read QYFTPR and TAG.

It belongs to the N(4)/N(6)-methyltransferase family. The type I restriction/modification system is composed of three polypeptides R, M and S. The restriction enzyme has stoichiometry R(2)M(2)S(1). The methyltransferase is composed of M(2)S(1). As to quaternary structure, (Microbial infection) Interacts with Escherichia phage T7 protein Ocr; this interaction leads to the inhibition of the methyltransferase restriction enzyme M.EcoKI composed of M(2)S(1).

It carries out the reaction a 2'-deoxyadenosine in DNA + S-adenosyl-L-methionine = an N(6)-methyl-2'-deoxyadenosine in DNA + S-adenosyl-L-homocysteine + H(+). The subtype gamma methyltransferase (M) subunit of a type I restriction enzyme. The M and S subunits together form a methyltransferase (MTase) that methylates A-2 on the top and A-3 on the bottom strand of the sequence 5'-AACN(6)GTGC-3'. In the presence of the R subunit the complex can also act as an endonuclease, binding to the same target sequence but cutting the DNA some distance from this site. Whether the DNA is cut or modified depends on the methylation state of the target sequence. When the target site is unmodified, the DNA is cut. When the target site is hemimethylated, the complex acts as a maintenance MTase modifying the DNA so that both strands become methylated. After locating a non-methylated recognition site, the enzyme complex serves as a molecular motor that translocates DNA in an ATP-dependent manner until a collision occurs that triggers cleavage. This Escherichia coli (strain K12) protein is Type I restriction enzyme EcoKI methylase subunit.